Here is a 371-residue protein sequence, read N- to C-terminus: UDP-N-acetylglucosamine--N-acetylmuramyl-(pentapeptide) pyrophosphoryl-undecaprenol N-acetylglucosamine transferase (371 aa).

Residues 15-17 (TGG), asparagine 126, arginine 172, serine 199, isoleucine 256, 275-280 (ALTVSE), and glutamine 301 contribute to the UDP-N-acetyl-alpha-D-glucosamine site.

Belongs to the glycosyltransferase 28 family. MurG subfamily.

The protein localises to the cell inner membrane. It carries out the reaction di-trans,octa-cis-undecaprenyl diphospho-N-acetyl-alpha-D-muramoyl-L-alanyl-D-glutamyl-meso-2,6-diaminopimeloyl-D-alanyl-D-alanine + UDP-N-acetyl-alpha-D-glucosamine = di-trans,octa-cis-undecaprenyl diphospho-[N-acetyl-alpha-D-glucosaminyl-(1-&gt;4)]-N-acetyl-alpha-D-muramoyl-L-alanyl-D-glutamyl-meso-2,6-diaminopimeloyl-D-alanyl-D-alanine + UDP + H(+). It functions in the pathway cell wall biogenesis; peptidoglycan biosynthesis. Its function is as follows. Cell wall formation. Catalyzes the transfer of a GlcNAc subunit on undecaprenyl-pyrophosphoryl-MurNAc-pentapeptide (lipid intermediate I) to form undecaprenyl-pyrophosphoryl-MurNAc-(pentapeptide)GlcNAc (lipid intermediate II). The sequence is that of UDP-N-acetylglucosamine--N-acetylmuramyl-(pentapeptide) pyrophosphoryl-undecaprenol N-acetylglucosamine transferase from Francisella tularensis subsp. tularensis (strain WY96-3418).